The chain runs to 192 residues: Glycerol-3-phosphate acyltransferase (192 aa).

A run of 5 helical transmembrane segments spans residues 1–21 (MTSA…GVLL), 51–71 (LGAV…VLAV), 78–98 (PTVH…PVWL), 112–132 (VLLV…VAVF), and 155–175 (LTAR…LMLW).

It belongs to the PlsY family. As to quaternary structure, probably interacts with PlsX.

The protein localises to the cell inner membrane. It carries out the reaction an acyl phosphate + sn-glycerol 3-phosphate = a 1-acyl-sn-glycero-3-phosphate + phosphate. The protein operates within lipid metabolism; phospholipid metabolism. Its function is as follows. Catalyzes the transfer of an acyl group from acyl-phosphate (acyl-PO(4)) to glycerol-3-phosphate (G3P) to form lysophosphatidic acid (LPA). This enzyme utilizes acyl-phosphate as fatty acyl donor, but not acyl-CoA or acyl-ACP. This is Glycerol-3-phosphate acyltransferase from Myxococcus xanthus (strain DK1622).